Reading from the N-terminus, the 210-residue chain is 3-hexulose-6-phosphate synthase (210 aa).

The protein belongs to the HPS/KGPDC family. HPS subfamily.

It carries out the reaction D-ribulose 5-phosphate + formaldehyde = D-arabino-hex-3-ulose 6-phosphate. Its pathway is one-carbon metabolism; formaldehyde assimilation via RuMP pathway; D-fructose 6-phosphate from D-ribulose 5-phosphate and formaldehyde: step 1/2. Catalyzes the condensation of ribulose 5-phosphate with formaldehyde to form 3-hexulose 6-phosphate. This chain is 3-hexulose-6-phosphate synthase, found in Staphylococcus haemolyticus (strain JCSC1435).